A 245-amino-acid chain; its full sequence is Phycocyanobilin:ferredoxin oxidoreductase (245 aa).

It belongs to the HY2 family.

It catalyses the reaction (2R,3Z)-phycocyanobilin + 4 oxidized [2Fe-2S]-[ferredoxin] = biliverdin IXalpha + 4 reduced [2Fe-2S]-[ferredoxin] + 4 H(+). Functionally, catalyzes the four-electron reduction of biliverdin IX-alpha (2-electron reduction at both the A and D rings); the reaction proceeds via an isolatable 2-electron intermediate, 181,182-dihydrobiliverdin. The polypeptide is Phycocyanobilin:ferredoxin oxidoreductase (Trichodesmium erythraeum (strain IMS101)).